We begin with the raw amino-acid sequence, 413 residues long: MNTSRLFSLFFQGNLVKRIFIGLILGLLVALVTPTLQNVLGFNLAEKVGVLGTIFVRSLRAVAPILIFVLVMAAIANKKIGAKSNMKSIIVLYLLGTFLAALSAVIAGFLFPSEVALATKEDMTSAPQGVGQVLLTLVFNVVDNPLNALFKANFVGVLAWSIGLGLALRHASESTKTMVSDLAEAVSKIVYVIIAFAPIGVFGLVSETLADKGLVALGGYIHLLAVLVGTMLFVAFVVNPILVYWKIRRNPYPLVWTCVRESGLTAFFTRSSAANIPVNINLAKRLNLDEETYSVSIPLGATINMAGAAITVTILTLAAVHTLDIQISFFSALLLSVVASICACGASGVAGGSLLLIPLACSLFGVSDDVAAQMIGVGFIIGILQDSTETALNSSTDVLFTAAACIAEENKQV.

8 helical membrane passes run 19–39 (IFIG…LQNV), 61–81 (AVAP…KKIG), 89–109 (IIVL…IAGF), 148–168 (ALFK…GLAL), 189–209 (IVYV…SETL), 223–243 (LLAV…PILV), 297–317 (IPLG…ILTL), and 325–345 (IQIS…CACG).

The protein belongs to the dicarboxylate/amino acid:cation symporter (DAACS) (TC 2.A.23) family.

The protein resides in the cell inner membrane. The enzyme catalyses L-serine(in) + Na(+)(in) = L-serine(out) + Na(+)(out). It carries out the reaction L-threonine(in) + Na(+)(in) = L-threonine(out) + Na(+)(out). Its function is as follows. Involved in the import of serine and threonine into the cell, with the concomitant import of sodium (symport system). This chain is Serine/threonine transporter SstT, found in Pasteurella multocida (strain Pm70).